We begin with the raw amino-acid sequence, 180 residues long: Adenine phosphoribosyltransferase (180 aa).

The protein belongs to the purine/pyrimidine phosphoribosyltransferase family. In terms of assembly, homodimer.

It is found in the cytoplasm. The catalysed reaction is AMP + diphosphate = 5-phospho-alpha-D-ribose 1-diphosphate + adenine. It participates in purine metabolism; AMP biosynthesis via salvage pathway; AMP from adenine: step 1/1. Functionally, catalyzes a salvage reaction resulting in the formation of AMP, that is energically less costly than de novo synthesis. This is Adenine phosphoribosyltransferase from Marinobacter nauticus (strain ATCC 700491 / DSM 11845 / VT8) (Marinobacter aquaeolei).